The primary structure comprises 299 residues: MTSPREEITVRLSCGHPLRVPDGEFCFGDGAYCCDCDERAVFFAPDHLTTVLSKVAPEGLDALTEKSWKLAKAIVTCGTCGDVLYQPVIHERCGHVCCRFCFRDKCAECGLMRTAVRPLPDLERLIQESLFGHDTRGLEYSDKFTAELMGPQGKEVILLYDGALGNVFVDLVTGISAVIADRAEKPIDLVDIVLNPDWSPVPCTIPYRLFRLLVKANAEMGVHDWSDLVTLGAWNILVEYGAVPGLDRSRLLEFLRYLVIPGFDGAETFPALTETFLSILAECTWVGDSRCGYRDACSR.

This chain is Putative zinc-binding protein ORF12 (ORF12), found in Ictaluridae (bullhead catfishes).